A 1024-amino-acid chain; its full sequence is Beta-galactosidase (1024 aa).

Residues Asn103 and Asp202 each coordinate substrate. Residue Asp202 participates in Na(+) binding. Residues Glu417, His419, and Glu462 each contribute to the Mg(2+) site. Residues Glu462 and 538-541 (EYAH) contribute to the substrate site. Glu462 serves as the catalytic Proton donor. Catalysis depends on Glu538, which acts as the Nucleophile. Asn598 contributes to the Mg(2+) binding site. Na(+) is bound by residues Phe602 and Asn605. Asn605 and Trp1000 together coordinate substrate.

This sequence belongs to the glycosyl hydrolase 2 family. Homotetramer. Mg(2+) is required as a cofactor. Requires Mn(2+) as cofactor. Na(+) serves as cofactor.

The catalysed reaction is Hydrolysis of terminal non-reducing beta-D-galactose residues in beta-D-galactosides.. Inhibited by phenylethyl thio-beta-D-galactoside (PETG), isopropyl thio-beta-D-galactoside (IPTG), L-ribose, D-galactonolactone, lactose and 2-amino-D-galactose. The chain is Beta-galactosidase (lacZ) from Escherichia coli (strain K12).